Consider the following 146-residue polypeptide: MGLRLNELSPGVGAKKTAQRRGRGIGSGLGKTGGRGVKGQKSRSGSSVRSGFEGGQTPLYRRLPKFGFTSKMAMTTAEVRLSELNQIEGDVVSIETLKAANLIRRDMKRARVMLSGEVTKAYTFKGIKVTKGAKQAIEAAGGSIEE.

The segment at 1 to 56 (MGLRLNELSPGVGAKKTAQRRGRGIGSGLGKTGGRGVKGQKSRSGSSVRSGFEGGQ) is disordered. Positions 24–37 (GIGSGLGKTGGRGV) are enriched in gly residues.

This sequence belongs to the universal ribosomal protein uL15 family. Part of the 50S ribosomal subunit.

In terms of biological role, binds to the 23S rRNA. This chain is Large ribosomal subunit protein uL15, found in Psychrobacter arcticus (strain DSM 17307 / VKM B-2377 / 273-4).